Here is a 212-residue protein sequence, read N- to C-terminus: uncharacterized protein (212 aa).

Residues Gly-53, Glu-74, and Asp-97 each coordinate S-adenosyl-L-methionine.

It belongs to the methyltransferase superfamily. YrrT family.

Could be a S-adenosyl-L-methionine-dependent methyltransferase. This is an uncharacterized protein from Bacillus cereus (strain 03BB102).